Here is a 925-residue protein sequence, read N- to C-terminus: Collagen alpha-2(I) chain (925 aa).

A disordered region spans residues 1-925; it reads SGGFDFSFLP…FGYEGDFYRA (925 aa). A 4-hydroxyproline mark is found at P10 and P13. A compositionally biased stretch (gly residues) spans 22–34; sequence RYYGVGLGPGPMG. Positions 35 to 74 are enriched in low complexity; that stretch reads LMGPRGPPGASGAPGPQGFQGPAGEPGEPGQTGPAGARGP. Residues P42 and P48 each carry the 4-hydroxyproline modification. K103 carries the 5-hydroxylysine; alternate modification. O-linked (Gal...) hydroxylysine; alternate glycosylation is present at K103. Low complexity predominate over residues 154 to 171; sequence DGSVGPVGPAGPIGSAGP. The span at 271-280 shows a compositional bias: gly residues; it reads GESGGKGEPG. Residues 281–291 are compositionally biased toward low complexity; it reads SAGPQGPPGSS. Residues 306 to 315 show a composition bias toward gly residues; sequence GLRGGPGSRG. 3 positions are modified to 4-hydroxyproline: P317, P332, and P335. Residues 363 to 379 show a composition bias toward low complexity; it reads IDGRPGPIGPAGARGEA. The span at 423–432 shows a compositional bias: gly residues; sequence GVQGGKGEQG. Composition is skewed to low complexity over residues 479–496 and 508–518; these read PGES…SRGP and EPGVVGAPGTA. The segment covering 519-528 has biased composition (gly residues); sequence GPAGSGGLPG. Composition is skewed to low complexity over residues 551 to 595 and 602 to 622; these read VGTT…PRGS and VGPA…QPGA. A compositionally biased stretch (basic and acidic residues) spans 623–632; that stretch reads KGERGTKGPK. Low complexity predominate over residues 640 to 650; it reads PTGPVGSAGPA. The span at 660–669 shows a compositional bias: gly residues; it reads GSRGDGGPPG. The segment covering 671-680 has biased composition (low complexity); the sequence is TGFPGAAGRT. Residues 696-718 show a composition bias toward gly residues; the sequence is GAAGKGDQGPVGRGETGAGGPPG. Composition is skewed to low complexity over residues 719 to 753 and 761 to 771; these read FTGE…LGLP and LPGVAGAVGEP. A compositionally biased stretch (gly residues) spans 772-782; that stretch reads GPLGIGPPGAR. Residues 791-806 are compositionally biased toward low complexity; it reads EPGPVGSVGPVGALGP. A compositionally biased stretch (basic and acidic residues) spans 816–827; it reads RGDKGEPGEKGP. The segment covering 897 to 907 has biased composition (pro residues); sequence PAGPPGPPGPP.

The protein belongs to the fibrillar collagen family. As to quaternary structure, trimers of one alpha 2(I) and two alpha 1(I) chains. Interacts (via C-terminus) with TMEM131 (via PapD-L domain); the interaction is direct and is involved in assembly and TRAPPIII ER-to-Golgi transport complex-dependent secretion of collagen. In terms of processing, prolines at the third position of the tripeptide repeating unit (G-X-Y) are hydroxylated in some or all of the chains. Expressed in bones.

It localises to the secreted. The protein localises to the extracellular space. Its subcellular location is the extracellular matrix. Type I collagen is a member of group I collagen (fibrillar forming collagen). This Acratocnus sp. (strain SLP-2019) (Ground sloth) protein is Collagen alpha-2(I) chain.